The following is a 2890-amino-acid chain: Bifunctional DNA-directed RNA polymerase subunit beta-beta' (2890 aa).

Residues 1-1377 form a DNA-directed RNA polymerase subunit beta region; the sequence is MSKKIPLKNR…DINIFGDDVD (1377 aa). The segment at 1384–2890 is DNA-directed RNA polymerase subunit beta'; it reads PIVIKEDDRP…LRTLEDDPKF (1507 aa). The Zn(2+) site is built by C1449, C1451, C1465, and C1468. Mg(2+)-binding residues include D1849, D1851, and D1853. 4 residues coordinate Zn(2+): C2179, C2253, C2260, and C2263.

It in the N-terminal section; belongs to the RNA polymerase beta chain family. In the C-terminal section; belongs to the RNA polymerase beta' chain family. In terms of assembly, the RNAP catalytic core consists of 2 alpha, 1 beta/beta' and 1 omega subunit. When a sigma factor is associated with the core the holoenzyme is formed, which can initiate transcription. It depends on Mg(2+) as a cofactor. Zn(2+) serves as cofactor.

The enzyme catalyses RNA(n) + a ribonucleoside 5'-triphosphate = RNA(n+1) + diphosphate. Functionally, DNA-dependent RNA polymerase catalyzes the transcription of DNA into RNA using the four ribonucleoside triphosphates as substrates. This is Bifunctional DNA-directed RNA polymerase subunit beta-beta' (rpoBC) from Helicobacter pylori (strain Shi470).